A 481-amino-acid polypeptide reads, in one-letter code: Proline--tRNA ligase (481 aa).

This sequence belongs to the class-II aminoacyl-tRNA synthetase family. ProS type 3 subfamily. As to quaternary structure, homodimer.

It is found in the cytoplasm. It catalyses the reaction tRNA(Pro) + L-proline + ATP = L-prolyl-tRNA(Pro) + AMP + diphosphate. Functionally, catalyzes the attachment of proline to tRNA(Pro) in a two-step reaction: proline is first activated by ATP to form Pro-AMP and then transferred to the acceptor end of tRNA(Pro). The sequence is that of Proline--tRNA ligase from Saccharolobus islandicus (strain M.16.27) (Sulfolobus islandicus).